A 213-amino-acid polypeptide reads, in one-letter code: Cytochrome b6 (213 aa).

Residues 30–50 form a helical membrane-spanning segment; that stretch reads IFYCLGGLTLLAFLVQCVTGL. A heme c-binding site is contributed by Cys33. Residues His84 and His98 each coordinate heme b. 3 consecutive transmembrane segments (helical) span residues 88 to 108, 114 to 134, and 184 to 204; these read ANLM…TGSF, LNWL…FTGY, and LHVM…FIMI. His185 and His200 together coordinate heme b.

This sequence belongs to the cytochrome b family. PetB subfamily. As to quaternary structure, the subunits of the cytochrome bc complex are a Rieske Fe-S protein (PetC), cytochrome b6 (PetB), subunit IV (PetD), and a diheme cytochrome c (PetX). Heme b is required as a cofactor. It depends on heme c as a cofactor.

It localises to the cell membrane. Its function is as follows. Component of the cytochrome bc complex which donates electrons to the photosynthetic reaction center. The protein is Cytochrome b6 of Heliobacterium mobile (Heliobacillus mobilis).